Consider the following 182-residue polypeptide: ATP synthase subunit b, chloroplastic (182 aa).

A helical transmembrane segment spans residues 29-47 (IINLALLIVLVINVAKDVL).

This sequence belongs to the ATPase B chain family. In terms of assembly, F-type ATPases have 2 components, F(1) - the catalytic core - and F(0) - the membrane proton channel. F(1) has five subunits: alpha(3), beta(3), gamma(1), delta(1), epsilon(1). F(0) has four main subunits: a(1), b(1), b'(1) and c(10-14). The alpha and beta chains form an alternating ring which encloses part of the gamma chain. F(1) is attached to F(0) by a central stalk formed by the gamma and epsilon chains, while a peripheral stalk is formed by the delta, b and b' chains.

The protein resides in the plastid. Its subcellular location is the chloroplast thylakoid membrane. Functionally, f(1)F(0) ATP synthase produces ATP from ADP in the presence of a proton or sodium gradient. F-type ATPases consist of two structural domains, F(1) containing the extramembraneous catalytic core and F(0) containing the membrane proton channel, linked together by a central stalk and a peripheral stalk. During catalysis, ATP synthesis in the catalytic domain of F(1) is coupled via a rotary mechanism of the central stalk subunits to proton translocation. Component of the F(0) channel, it forms part of the peripheral stalk, linking F(1) to F(0). The polypeptide is ATP synthase subunit b, chloroplastic (Heterosigma akashiwo (strain NIES-293 / 8280G21-1)).